The primary structure comprises 253 residues: Imidazole glycerol phosphate synthase subunit HisF (253 aa).

Active-site residues include aspartate 11 and aspartate 130.

Belongs to the HisA/HisF family. In terms of assembly, heterodimer of HisH and HisF.

It is found in the cytoplasm. The catalysed reaction is 5-[(5-phospho-1-deoxy-D-ribulos-1-ylimino)methylamino]-1-(5-phospho-beta-D-ribosyl)imidazole-4-carboxamide + L-glutamine = D-erythro-1-(imidazol-4-yl)glycerol 3-phosphate + 5-amino-1-(5-phospho-beta-D-ribosyl)imidazole-4-carboxamide + L-glutamate + H(+). It functions in the pathway amino-acid biosynthesis; L-histidine biosynthesis; L-histidine from 5-phospho-alpha-D-ribose 1-diphosphate: step 5/9. In terms of biological role, IGPS catalyzes the conversion of PRFAR and glutamine to IGP, AICAR and glutamate. The HisF subunit catalyzes the cyclization activity that produces IGP and AICAR from PRFAR using the ammonia provided by the HisH subunit. This Clostridium botulinum (strain Okra / Type B1) protein is Imidazole glycerol phosphate synthase subunit HisF.